Consider the following 349-residue polypeptide: Paired box protein Pax-4 (349 aa).

Residues 5–131 (GLSSVNQLGG…SSINRVLRAL (127 aa)) constitute a DNA-binding region (paired). The segment at 8 to 64 (SVNQLGGLFVNGRPLPLDTRQQIVQLAIRGMRPCDISRSLKVSNGCVSKILGRYYRT) is PAI subdomain. Residues 83–131 (AVVARIAQLKDEYPALFAWEIQHQLCTEGLCTQDKAPSVSSINRVLRAL) are RED subdomain. Positions 170-229 (SHRNRTIFSPGQAEALEKEFQRGQYPDSVARGKLAAATSLPEDTVRVWFSNRRAKWRRQE) form a DNA-binding region, homeobox. The segment at 278–349 (FCQLCCGTAP…VPSTHCSNWP (72 aa)) is transcription repression.

Belongs to the paired homeobox family. In terms of tissue distribution, expressed in early pancreas. Later restricted to beta cells. Undetectable in adult islets.

Its subcellular location is the nucleus. Its function is as follows. Plays an important role in the differentiation and development of pancreatic islet beta cells. Transcriptional repressor that competes with PAX6 in binding to a common element in the glucagon, insulin and somatostatin promoters. This Mus musculus (Mouse) protein is Paired box protein Pax-4 (Pax4).